We begin with the raw amino-acid sequence, 162 residues long: MAFTFAAFCYMLTLVLCASLIFFIIWHIIAFDDLRTDFKDPIEQGNPSRARERIKNVERVCCLLRKLVVPEYCIHGLFCLMFMCAAEWVTLGLNIPLLFYHLWRYFHRPADGSEVMFDPVSIMNVDILNYCQKEAWCKLAFYLLSFFYYLYRVGATVRYVSA.

Residues M1–Y10 lie on the Cytoplasmic side of the membrane. Residues M11–F31 form a helical membrane-spanning segment. Residues D32–Y72 lie on the Lumenal side of the membrane. Residues C73–L93 form a helical membrane-spanning segment. At N94–K138 the chain is on the cytoplasmic side. Residues L139 to S161 traverse the membrane as a helical segment. A topological domain (lumenal) is located at residue A162.

The protein belongs to the cornichon family.

The protein localises to the membrane. In terms of biological role, regulates the trafficking and gating properties of AMPA-selective glutamate receptors (AMPARs). The sequence is that of Protein cornichon homolog 2 (cnih2) from Xenopus laevis (African clawed frog).